Consider the following 399-residue polypeptide: Nitric oxide reductase (399 aa).

The tract at residues 32-221 (HRGTTYNAYL…DEIQKINLAI (190 aa)) is zinc metallo-hydrolase. Fe cation-binding residues include His81, Glu83, Asp85, His148, Asp167, and His228. Positions 255-394 (AVIAYDTMWL…RCYELGRKIA (140 aa)) constitute a Flavodoxin-like domain.

It in the N-terminal section; belongs to the zinc metallo-hydrolase group 3 family. As to quaternary structure, homodimer. It depends on FMN as a cofactor. Requires Fe cation as cofactor.

Functionally, has nitric oxide reductase activity in combination with Hrb; probably involved in nitrosative stress protection. This chain is Nitric oxide reductase (fprA), found in Moorella thermoacetica (strain ATCC 39073 / JCM 9320).